The sequence spans 331 residues: Ferredoxin--NADP reductase (331 aa).

The FAD site is built by glutamate 34, glutamine 42, tyrosine 47, valine 87, phenylalanine 121, aspartate 285, and threonine 325.

This sequence belongs to the ferredoxin--NADP reductase type 2 family. As to quaternary structure, homodimer. FAD serves as cofactor.

The enzyme catalyses 2 reduced [2Fe-2S]-[ferredoxin] + NADP(+) + H(+) = 2 oxidized [2Fe-2S]-[ferredoxin] + NADPH. The chain is Ferredoxin--NADP reductase from Lactiplantibacillus plantarum (strain ATCC BAA-793 / NCIMB 8826 / WCFS1) (Lactobacillus plantarum).